The following is a 1444-amino-acid chain: Bromodomain-containing protein 4 (1444 aa).

Disordered stretches follow at residues 1–44 (MGDG…PKRQ), 154–217 (VEIS…PQPI), 279–362 (AAPP…KQQE), 492–523 (PVMA…ERAQ), 540–645 (AALS…GGAA), 722–986 (CLRK…SSQP), and 1020–1422 (TSLM…RREA). Over residues 11-27 (SGSSSSQGQPSSQAPSS) the composition is skewed to low complexity. The Bromo 1 domain maps to 43 to 149 (RQTNQLQYLL…KVFLTKISEM (107 aa)). The span at 186–196 (ASPQTRGLSNL) shows a compositional bias: polar residues. The segment covering 206-216 (PQGPPTLPPQP) has biased composition (pro residues). Residues 303 to 319 (TTTPTANDQLNESSPAE) are compositionally biased toward polar residues. Basic and acidic residues predominate over residues 327–347 (PRRDNTRPSKLPKKEAPDSQH). One can recognise a Bromo 2 domain in the interval 358–467 (PKQQEQLRYC…DVFEMRFAKM (110 aa)). A compositionally biased stretch (low complexity) spans 498-511 (SSSDTSSDSSSESE). Residues 498 to 517 (SSSDTSSDSSSESESSTDDS) are NPS region. Residues 538 to 610 (QLAALSQPQA…SKKLSKKEGG (73 aa)) form a BID region region. Basic residues predominate over residues 549–569 (KPKKKEKEKKEKKKDKHKKKA). The 98-residue stretch at 633–730 (DTEEDLGLTG…SCLRKKKKPA (98 aa)) folds into the NET domain. Composition is skewed to low complexity over residues 746 to 760 (GTSS…SSSS), 800 to 823 (LQPQ…HPSP), 919 to 954 (LQQS…QQQH), and 1036 to 1046 (PSLLQSVQVQS). The span at 1090 to 1109 (PLQTAQTQPGQHKVSMPSTK) shows a compositional bias: polar residues. Low complexity predominate over residues 1110–1121 (AQQIIQQQQATQ). A C-terminal (CTD) region region spans residues 1126 to 1444 (RQHKADSYNS…LMAIFEENLF (319 aa)). Over residues 1151–1163 (QIPQYSLVHQSPS) the composition is skewed to polar residues. A compositionally biased stretch (basic and acidic residues) spans 1246 to 1255 (QDKEKFKQEP). The span at 1282 to 1296 (SSTTPSSGLKSSSDS) shows a compositional bias: low complexity. The segment covering 1298–1357 (EQFRRAAREKEEREKALKAQVEQAEKDRLRKEQEKLRGRDEEDSIEPPRRPLEEPRRRQE) has biased composition (basic and acidic residues). Low complexity predominate over residues 1367–1389 (QHQTQAQAQTLNPAQSPSASQPT). Basic and acidic residues predominate over residues 1405–1422 (QQREMARRREQERRRREA).

The protein belongs to the BET family. In terms of tissue distribution, widely expressed.

The protein resides in the nucleus. The protein localises to the chromosome. In terms of biological role, chromatin reader protein that recognizes and binds acetylated histones and plays a key role in transmission of epigenetic memory across cell divisions and transcription regulation. Remains associated with acetylated chromatin throughout the entire cell cycle and provides epigenetic memory for postmitotic G1 gene transcription by preserving acetylated chromatin status and maintaining high-order chromatin structure. During interphase, plays a key role in regulating the transcription of signal-inducible genes by associating with the P-TEFb complex and recruiting it to promoters. This is Bromodomain-containing protein 4 (brd4) from Danio rerio (Zebrafish).